A 173-amino-acid polypeptide reads, in one-letter code: Macro domain-containing protein in gbd 3'region (173 aa).

Residues methionine 1–serine 173 enclose the Macro domain.

The protein belongs to the MacroD-type family.

The polypeptide is Macro domain-containing protein in gbd 3'region (Cupriavidus necator (Alcaligenes eutrophus)).